The following is a 679-amino-acid chain: Methionine--tRNA ligase (679 aa).

The 'HIGH' region motif lies at 15–25; it reads PYANGPIHLGH. Residues Cys146, Cys149, Cys159, and Cys162 each contribute to the Zn(2+) site. The short motif at 332 to 336 is the 'KMSKS' region element; the sequence is KMSKS. Lys335 contributes to the ATP binding site. Positions 578-679 constitute a tRNA-binding domain; the sequence is DFAKIDLRIA…EGAQPGMKVK (102 aa).

Belongs to the class-I aminoacyl-tRNA synthetase family. MetG type 1 subfamily. Homodimer. The cofactor is Zn(2+).

The protein resides in the cytoplasm. The enzyme catalyses tRNA(Met) + L-methionine + ATP = L-methionyl-tRNA(Met) + AMP + diphosphate. Is required not only for elongation of protein synthesis but also for the initiation of all mRNA translation through initiator tRNA(fMet) aminoacylation. The polypeptide is Methionine--tRNA ligase (Shewanella halifaxensis (strain HAW-EB4)).